We begin with the raw amino-acid sequence, 207 residues long: Peptidyl-tRNA hydrolase (207 aa).

Tyr-17 is a binding site for tRNA. The active-site Proton acceptor is the His-22. Residues Phe-68, Asn-70, and Asn-116 each coordinate tRNA.

Belongs to the PTH family. Monomer.

The protein resides in the cytoplasm. The enzyme catalyses an N-acyl-L-alpha-aminoacyl-tRNA + H2O = an N-acyl-L-amino acid + a tRNA + H(+). Functionally, hydrolyzes ribosome-free peptidyl-tRNAs (with 1 or more amino acids incorporated), which drop off the ribosome during protein synthesis, or as a result of ribosome stalling. Catalyzes the release of premature peptidyl moieties from peptidyl-tRNA molecules trapped in stalled 50S ribosomal subunits, and thus maintains levels of free tRNAs and 50S ribosomes. The polypeptide is Peptidyl-tRNA hydrolase (Buchnera aphidicola subsp. Baizongia pistaciae (strain Bp)).